Here is a 92-residue protein sequence, read N- to C-terminus: UPF0250 protein XAC0666 (92 aa).

This sequence belongs to the UPF0250 family.

The sequence is that of UPF0250 protein XAC0666 from Xanthomonas axonopodis pv. citri (strain 306).